The sequence spans 771 residues: DNA polymerase 1 (771 aa).

Belongs to the DNA polymerase type-B family.

It catalyses the reaction DNA(n) + a 2'-deoxyribonucleoside 5'-triphosphate = DNA(n+1) + diphosphate. This is DNA polymerase 1 (polI) from Pyrococcus abyssi (strain GE5 / Orsay).